Reading from the N-terminus, the 44-residue chain is Brevinin-1PLa (44 aa).

Residues 1-18 (NAEEERRDEPDETDVEVE) constitute a propeptide that is removed on maturation. Cysteines 38 and 44 form a disulfide.

In terms of tissue distribution, expressed by the skin glands.

The protein localises to the secreted. Functionally, antimicrobial peptide. The protein is Brevinin-1PLa of Lithobates palustris (Pickerel frog).